The following is a 324-amino-acid chain: Olfactory receptor 2T2 (324 aa).

Topologically, residues 1–26 (MGMEGLLQNSTNFVLTGLITHPAFPG) are extracellular. Asn9 is a glycosylation site (N-linked (GlcNAc...) asparagine). Residues 27 to 50 (LLFAIVFSIFVVAITANLVMILLI) form a helical membrane-spanning segment. The Cytoplasmic segment spans residues 51 to 58 (HMDSRLHT). The helical transmembrane segment at 59 to 80 (PMYFLLSQLSIMDTIYICITVP) threads the bilayer. The Extracellular portion of the chain corresponds to 81–101 (KMLQDLLSKDKTISFLGCAVQ). Cys98 and Cys190 are oxidised to a cystine. A helical transmembrane segment spans residues 102–121 (IFLYLTLIGGEFFLLGLMAY). Residues 122 to 140 (DRYVAVCNPLRYPLLMNRR) are Cytoplasmic-facing. Residues 141–159 (VCLFMVVGSWVGGSLDGFM) traverse the membrane as a helical segment. Residues 160 to 196 (LTPVTMSFPFCRSREINHFFCEIPAVLKLSCTDTSLY) lie on the Extracellular side of the membrane. The chain crosses the membrane as a helical span at residues 197 to 220 (ETLMYACCVLMLLIPLSVISVSYT). The Cytoplasmic segment spans residues 221–237 (HILLTVHRMNSAEGRRK). The helical transmembrane segment at 238–260 (AFATCSSHIMVVSVFYGAAFYTN) threads the bilayer. The Extracellular segment spans residues 261–273 (VLPHSYHTPEKDK). Residues 274–293 (VVSAFYTILTPMLNPLIYSL) form a helical membrane-spanning segment. Topologically, residues 294 to 324 (RNKDVAAALRKVLGRCGSSQSIRVATVIRKG) are cytoplasmic.

It belongs to the G-protein coupled receptor 1 family.

The protein resides in the cell membrane. Its function is as follows. Odorant receptor. This Homo sapiens (Human) protein is Olfactory receptor 2T2 (OR2T2).